Consider the following 197-residue polypeptide: Baseplate puncturing device gp45 (197 aa).

Residues 172 to 197 (DAIINGKSTDKHIHRGDSGGTTGPMQ) form a disordered region. Residues 179 to 188 (STDKHIHRGD) are compositionally biased toward basic and acidic residues. Positions 183 and 185 each coordinate Fe cation. Ca(2+)-binding residues include aspartate 188 and serine 189. Aspartate 188 is a chloride binding site.

As to quaternary structure, homotrimer. Part of a complex composed of three DNA circularization protein N, three baseplate hub protein gp44 and three sub-complex wedge (made of two copies of each baseplate protein gp46, gp47 and gp48) that forms the baseplate. Requires Ca(2+) as cofactor. Chloride serves as cofactor. The cofactor is Fe cation.

It localises to the virion. It is found in the host cytoplasm. Its function is as follows. Component of the baseplate that forms a central needlelike spike used to puncture the host cell membrane for tube insertion during virus entry. Probably involved in baseplate and tail assembly. Serves as the distal plug of tail tube channel and might regulate the process of the phage DNA and protein ejection into the host cell. In Escherichia phage Mu (Bacteriophage Mu), this protein is Baseplate puncturing device gp45.